Consider the following 178-residue polypeptide: 2-C-methyl-D-erythritol 2,4-cyclodiphosphate synthase (178 aa).

A divalent metal cation contacts are provided by aspartate 24, histidine 26, and histidine 61. A 4-CDP-2-C-methyl-D-erythritol 2-phosphate-binding site is contributed by 24-26 (DSH). 150–153 (TSGE) lines the 4-CDP-2-C-methyl-D-erythritol 2-phosphate pocket.

Belongs to the IspF family. As to quaternary structure, homotrimer. A divalent metal cation serves as cofactor.

It carries out the reaction 4-CDP-2-C-methyl-D-erythritol 2-phosphate = 2-C-methyl-D-erythritol 2,4-cyclic diphosphate + CMP. It participates in isoprenoid biosynthesis; isopentenyl diphosphate biosynthesis via DXP pathway; isopentenyl diphosphate from 1-deoxy-D-xylulose 5-phosphate: step 4/6. In terms of biological role, involved in the biosynthesis of isopentenyl diphosphate (IPP) and dimethylallyl diphosphate (DMAPP), two major building blocks of isoprenoid compounds. Catalyzes the conversion of 4-diphosphocytidyl-2-C-methyl-D-erythritol 2-phosphate (CDP-ME2P) to 2-C-methyl-D-erythritol 2,4-cyclodiphosphate (ME-CPP) with a corresponding release of cytidine 5-monophosphate (CMP). The polypeptide is 2-C-methyl-D-erythritol 2,4-cyclodiphosphate synthase (Chlamydia trachomatis serovar L2b (strain UCH-1/proctitis)).